A 115-amino-acid polypeptide reads, in one-letter code: Large ribosomal subunit protein bL21 (115 aa).

This sequence belongs to the bacterial ribosomal protein bL21 family. As to quaternary structure, part of the 50S ribosomal subunit. Contacts protein L20.

In terms of biological role, this protein binds to 23S rRNA in the presence of protein L20. The protein is Large ribosomal subunit protein bL21 of Coxiella burnetii (strain RSA 331 / Henzerling II).